Here is a 306-residue protein sequence, read N- to C-terminus: Ribonuclease Z (306 aa).

His63, His65, Asp67, His68, His141, Asp208, and His266 together coordinate Zn(2+). Asp67 (proton acceptor) is an active-site residue.

Belongs to the RNase Z family. As to quaternary structure, homodimer. Requires Zn(2+) as cofactor.

The enzyme catalyses Endonucleolytic cleavage of RNA, removing extra 3' nucleotides from tRNA precursor, generating 3' termini of tRNAs. A 3'-hydroxy group is left at the tRNA terminus and a 5'-phosphoryl group is left at the trailer molecule.. Zinc phosphodiesterase, which displays some tRNA 3'-processing endonuclease activity. Probably involved in tRNA maturation, by removing a 3'-trailer from precursor tRNA. In Chlamydia caviae (strain ATCC VR-813 / DSM 19441 / 03DC25 / GPIC) (Chlamydophila caviae), this protein is Ribonuclease Z.